Consider the following 529-residue polypeptide: uncharacterized protein (529 aa).

The protein to M.jannaschii MJ1451.

This is an uncharacterized protein from Methanothermobacter thermautotrophicus (strain ATCC 29096 / DSM 1053 / JCM 10044 / NBRC 100330 / Delta H) (Methanobacterium thermoautotrophicum).